We begin with the raw amino-acid sequence, 209 residues long: Probable GTP-binding protein EngB (209 aa).

The 177-residue stretch at threonine 22–alanine 198 folds into the EngB-type G domain. Mg(2+) is bound by residues serine 37 and threonine 59.

This sequence belongs to the TRAFAC class TrmE-Era-EngA-EngB-Septin-like GTPase superfamily. EngB GTPase family. The cofactor is Mg(2+).

Functionally, necessary for normal cell division and for the maintenance of normal septation. This chain is Probable GTP-binding protein EngB, found in Neisseria gonorrhoeae.